A 443-amino-acid polypeptide reads, in one-letter code: Xaa-Pro dipeptidase (443 aa).

Mn(2+) contacts are provided by Asp246, Asp257, His339, Glu384, and Glu423.

It belongs to the peptidase M24B family. Bacterial-type prolidase subfamily. Requires Mn(2+) as cofactor.

It catalyses the reaction Xaa-L-Pro dipeptide + H2O = an L-alpha-amino acid + L-proline. Splits dipeptides with a prolyl residue in the C-terminal position. This Salmonella choleraesuis (strain SC-B67) protein is Xaa-Pro dipeptidase.